The primary structure comprises 106 residues: MLSQSLLSGMRVLRTEARRNFGIVAPALNKASDPIQQLFLDKVREYKQKSAGGKLVDSNPDIERELKTELDRVAKQFGSDGKTDMLKFPEFQFPDVKVDPITQAPQ.

It belongs to the eukaryotic ATPase subunit F6 family. In terms of assembly, F-type ATPases have 2 components, CF(1) - the catalytic core - and CF(0) - the membrane proton channel. CF(0) seems to have nine subunits: a, b, c, d, e, f, g, F6 and 8 (or A6L).

The protein localises to the mitochondrion. Its subcellular location is the mitochondrion inner membrane. Functionally, mitochondrial membrane ATP synthase (F(1)F(0) ATP synthase or Complex V) produces ATP from ADP in the presence of a proton gradient across the membrane which is generated by electron transport complexes of the respiratory chain. F-type ATPases consist of two structural domains, F(1) - containing the extramembraneous catalytic core and F(0) - containing the membrane proton channel, linked together by a central stalk and a peripheral stalk. During catalysis, ATP synthesis in the catalytic domain of F(1) is coupled via a rotary mechanism of the central stalk subunits to proton translocation. Part of the complex F(0) domain and the peripheric stalk, which acts as a stator to hold the catalytic alpha(3)beta(3) subcomplex and subunit a/ATP6 static relative to the rotary elements. This Drosophila melanogaster (Fruit fly) protein is ATP synthase-coupling factor 6, mitochondrial.